Consider the following 414-residue polypeptide: L-cysteine:1D-myo-inositol 2-amino-2-deoxy-alpha-D-glucopyranoside ligase (414 aa).

Residue Cys43 participates in Zn(2+) binding. Residues 43 to 46 (CGIT), Thr58, and 81 to 83 (NVT) contribute to the L-cysteinyl-5'-AMP site. The 'HIGH' region motif lies at 45 to 55 (ITPYDATHLGH). The 'ERGGDP' region signature appears at 187–192 (ERGGDP). Position 227 (Trp227) interacts with L-cysteinyl-5'-AMP. Residue Cys231 coordinates Zn(2+). 249 to 251 (GSD) lines the L-cysteinyl-5'-AMP pocket. His256 is a Zn(2+) binding site. Position 283 (Ile283) interacts with L-cysteinyl-5'-AMP. The 'KMSKS' region motif lies at 289–293 (KMSKS).

This sequence belongs to the class-I aminoacyl-tRNA synthetase family. MshC subfamily. In terms of assembly, monomer. Zn(2+) serves as cofactor.

It catalyses the reaction 1D-myo-inositol 2-amino-2-deoxy-alpha-D-glucopyranoside + L-cysteine + ATP = 1D-myo-inositol 2-(L-cysteinylamino)-2-deoxy-alpha-D-glucopyranoside + AMP + diphosphate + H(+). Functionally, catalyzes the ATP-dependent condensation of GlcN-Ins and L-cysteine to form L-Cys-GlcN-Ins. The protein is L-cysteine:1D-myo-inositol 2-amino-2-deoxy-alpha-D-glucopyranoside ligase of Tsukamurella paurometabola (strain ATCC 8368 / DSM 20162 / CCUG 35730 / CIP 100753 / JCM 10117 / KCTC 9821 / NBRC 16120 / NCIMB 702349 / NCTC 13040) (Corynebacterium paurometabolum).